Here is a 1029-residue protein sequence, read N- to C-terminus: Chitin synthase 2 (1029 aa).

Disordered stretches follow at residues 1–160, 174–216, and 234–257; these read MDRP…GARS, SDVD…SHLR, and AHYGPAPAEGDQQRRGVREPQKSR. Over residues 61–77 the composition is skewed to low complexity; sequence PSVSSIHSRPSSISNIP. Over residues 244–257 the composition is skewed to basic and acidic residues; it reads DQQRRGVREPQKSR. Residue Asn348 is glycosylated (N-linked (GlcNAc...) asparagine). 8 consecutive transmembrane segments (helical) span residues 639–659, 681–701, 716–736, 752–772, 791–811, 820–840, 918–938, and 952–972; these read WLNGAFFAAIYSLVHFRQLWA, VLFTFFSLANFYLTFYFVAGG, LYIFTILRYTLILLICAQFIL, SMVIYGIVMVYTTFAAFYIVI, NLIVSMASTIGLYFLMSFIYL, SIQYFMLLPSYLCTLQVYAFC, YMVVSWMIANGILGMAVSEIY, and ILWSVASLALFRALGSTTFAI.

It belongs to the chitin synthase family. Class II subfamily.

The protein localises to the cell membrane. The enzyme catalyses [(1-&gt;4)-N-acetyl-beta-D-glucosaminyl](n) + UDP-N-acetyl-alpha-D-glucosamine = [(1-&gt;4)-N-acetyl-beta-D-glucosaminyl](n+1) + UDP + H(+). Its function is as follows. Polymerizes chitin, a structural polymer of the cell wall and septum, by transferring the sugar moiety of UDP-GlcNAc to the non-reducing end of the growing chitin polymer. Plays an important role in cell wall integrity and has distinct functions in invasive hyphae and vegetative hyphae, but is not involved in plant infection. The protein is Chitin synthase 2 of Pyricularia oryzae (strain 70-15 / ATCC MYA-4617 / FGSC 8958) (Rice blast fungus).